A 727-amino-acid polypeptide reads, in one-letter code: Glycerol-3-phosphate dehydrogenase, mitochondrial (727 aa).

Residues 1–42 (MAFQKAVKRTVLVCGGALATVLGLSQCSHYRRKQVNLACLKA) constitute a mitochondrion transit peptide. 71–99 (DILVIGGGATGSGCALDAVTRGLKTALVE) provides a ligand contact to FAD. Tyr601 bears the Phosphotyrosine mark. 2 EF-hand domains span residues 623 to 658 (SDIE…INVK) and 659 to 694 (IDEN…IQKG). Positions 672, 674, 676, 678, and 683 each coordinate Ca(2+).

This sequence belongs to the FAD-dependent glycerol-3-phosphate dehydrogenase family. The cofactor is FAD.

It is found in the mitochondrion. It carries out the reaction a quinone + sn-glycerol 3-phosphate = dihydroxyacetone phosphate + a quinol. It participates in polyol metabolism; glycerol degradation via glycerol kinase pathway; glycerone phosphate from sn-glycerol 3-phosphate (aerobic route): step 1/1. Calcium-binding enhance the activity of the enzyme. Its function is as follows. Calcium-responsive mitochondrial glycerol-3-phosphate dehydrogenase which seems to be a key component of the pancreatic beta-cell glucose-sensing device. This chain is Glycerol-3-phosphate dehydrogenase, mitochondrial (GPD2), found in Mesocricetus auratus (Golden hamster).